A 51-amino-acid polypeptide reads, in one-letter code: Ribosome biogenesis protein Nop10 (51 aa).

This sequence belongs to the NOP10 family.

Involved in ribosome biogenesis; more specifically in 18S rRNA pseudouridylation and in cleavage of pre-rRNA. The polypeptide is Ribosome biogenesis protein Nop10 (Methanococcus aeolicus (strain ATCC BAA-1280 / DSM 17508 / OCM 812 / Nankai-3)).